A 94-amino-acid chain; its full sequence is UPF0235 protein Dred_0717 (94 aa).

The protein belongs to the UPF0235 family.

This Desulforamulus reducens (strain ATCC BAA-1160 / DSM 100696 / MI-1) (Desulfotomaculum reducens) protein is UPF0235 protein Dred_0717.